We begin with the raw amino-acid sequence, 604 residues long: Aspartate--tRNA(Asp/Asn) ligase (604 aa).

Residue Glu175 coordinates L-aspartate. The tract at residues Gln199–Lys202 is aspartate. L-aspartate is bound by residues Arg221 and His456. Arg221 to Glu223 serves as a coordination point for ATP. Glu496 contacts ATP. Position 503 (Arg503) interacts with L-aspartate. Gly548–Arg551 is a binding site for ATP.

This sequence belongs to the class-II aminoacyl-tRNA synthetase family. Type 1 subfamily. Homodimer.

It is found in the cytoplasm. It carries out the reaction tRNA(Asx) + L-aspartate + ATP = L-aspartyl-tRNA(Asx) + AMP + diphosphate. In terms of biological role, aspartyl-tRNA synthetase with relaxed tRNA specificity since it is able to aspartylate not only its cognate tRNA(Asp) but also tRNA(Asn). Reaction proceeds in two steps: L-aspartate is first activated by ATP to form Asp-AMP and then transferred to the acceptor end of tRNA(Asp/Asn). The chain is Aspartate--tRNA(Asp/Asn) ligase from Methylorubrum extorquens (strain CM4 / NCIMB 13688) (Methylobacterium extorquens).